A 678-amino-acid polypeptide reads, in one-letter code: MRSPRVIHLACVIAYIVAVEAGDKPVYLPRPTPPRPIHPRLAREVGWELEGQGLSPLSEAELLPEVRERRSPVDKGGYLPRPTPPRPVYRSRRDASLESELSPLSVAEVLPEVRERRSPVDKGGYLPRPTPPRPVYRSRRDASLESELSPLSEAEVLPEVRERRSPVDKGGYLPRPTPPRPVYRSRRVASLESELSPLSEAEVLPEVRERRSPVDKGGYLPRPTPPRPVYRSRRDASLESELSPLSEEEVLPEVRERGSPVDKGGYLPRPTPPRPVYRSRRDASLESELSPLSVAEDLPEVRERRSPVDKGGYLPRPTPPRPVYRSRRDASLESELSPLSEAEVLPEVRERRSPVDKGGYLPRPTPPRPVYRSRRDASLESELSPLSEAEVLPEVRERRSPVDKGGYLPRPTPPRPVYRSRRDASLESELSPLSEAEVLPEVRERRSPVDKGGYLPRPTPPRPVYRSRRDASLESELSPLSEAEVLPEVRERRSPVDKGGYLPRPTPPRPVYRSRRDATLESELSPSSEAEVLPEVRERRSPVDKGGYLPRPTPPRPVYRSRRDASLESELSPLSEAEVLPEVRERRSPVDKGGYLPRPTPPRPVYRSRRDASLESELSPLSEAEGLPEVRERRSPGGQGGYLPRPTPRTPLCRSRRDANLDAEQSPVSEGVVLPEVR.

14 consecutive repeat copies span residues 1-67 (MRSP…PEVR), 68-114 (ERRS…PEVR), 115-161 (ERRS…PEVR), 162-208 (ERRS…PEVR), 209-255 (ERRS…PEVR), 256-302 (ERGS…PEVR), 303-349 (ERRS…PEVR), 350-396 (ERRS…PEVR), 397-443 (ERRS…PEVR), 444-490 (ERRS…PEVR), 491-537 (ERRS…PEVR), 538-584 (ERRS…PEVR), 585-631 (ERRS…PEVR), and 632-678 (ERRS…PEVR). The 14 X approximate tandem repeats stretch occupies residues 1–678 (MRSPRVIHLA…SEGVVLPEVR (678 aa)). Residue threonine 32 is glycosylated (O-linked (GalNAc...) threonine). 2 disordered regions span residues 58 to 97 (SEAE…DASL) and 113 to 678 (VRER…PEVR). A compositionally biased stretch (basic and acidic residues) spans 64–73 (PEVRERRSPV). 2 O-linked (GalNAc...) threonine glycosylation sites follow: threonine 83 and threonine 130. Residues 145–157 (ESELSPLSEAEVL) are compositionally biased toward low complexity. The segment covering 158 to 167 (PEVRERRSPV) has biased composition (basic and acidic residues). Threonine 177 carries an O-linked (GalNAc...) threonine glycan. Positions 188 to 204 (VASLESELSPLSEAEVL) are enriched in low complexity. Basic and acidic residues predominate over residues 205–214 (PEVRERRSPV). 2 O-linked (GalNAc...) threonine glycosylation sites follow: threonine 224 and threonine 271. Residues 299 to 308 (PEVRERRSPV) show a composition bias toward basic and acidic residues. O-linked (GalNAc...) threonine glycosylation is present at threonine 318. Residues 333–345 (ESELSPLSEAEVL) show a composition bias toward low complexity. The segment covering 346-355 (PEVRERRSPV) has biased composition (basic and acidic residues). An O-linked (GalNAc...) threonine glycan is attached at threonine 365. The span at 380–392 (ESELSPLSEAEVL) shows a compositional bias: low complexity. Basic and acidic residues predominate over residues 393 to 402 (PEVRERRSPV). Threonine 412 carries an O-linked (GalNAc...) threonine glycan. The segment covering 427 to 439 (ESELSPLSEAEVL) has biased composition (low complexity). The segment covering 440-449 (PEVRERRSPV) has biased composition (basic and acidic residues). Threonine 459 carries an O-linked (GalNAc...) threonine glycan. Residues 474 to 486 (ESELSPLSEAEVL) show a composition bias toward low complexity. A compositionally biased stretch (basic and acidic residues) spans 487 to 496 (PEVRERRSPV). O-linked (GalNAc...) threonine glycosylation occurs at threonine 506. Positions 521 to 533 (ESELSPSSEAEVL) are enriched in low complexity. Positions 534-543 (PEVRERRSPV) are enriched in basic and acidic residues. Threonine 553 carries O-linked (GalNAc...) threonine glycosylation. Residues 568–580 (ESELSPLSEAEVL) show a composition bias toward low complexity. Basic and acidic residues predominate over residues 581–590 (PEVRERRSPV). Threonine 600 carries O-linked (GalNAc...) threonine glycosylation. Positions 615–627 (ESELSPLSEAEGL) are enriched in low complexity. An O-linked (GalNAc...) threonine glycan is attached at threonine 647.

It is found in the secreted. Functionally, has antibacterial activity in vitro. The sequence is that of Probable antibacterial peptide polyprotein from Riptortus clavatus (Bean bug).